Reading from the N-terminus, the 1146-residue chain is Ankyrin repeat and fibronectin type-III domain-containing protein 1 (1146 aa).

2 ANK repeats span residues 133-162 (QGNE…PEEL) and 170-199 (EGLT…RESP). The Fibronectin type-III domain occupies 270-366 (MPTNVCLMVT…TTTPACASPS (97 aa)). The segment at 607–614 (GLYLGYLK) is highly conserved peptide sequence. 3 disordered regions span residues 855 to 887 (NSTS…QPCS), 945 to 964 (VKTP…NPDH), and 1106 to 1146 (PWAS…SSML). Over residues 1131–1146 (EGPTASPMSEILSSML) the composition is skewed to polar residues.

Its function is as follows. May play a role in neuronal function. This chain is Ankyrin repeat and fibronectin type-III domain-containing protein 1, found in Homo sapiens (Human).